Reading from the N-terminus, the 304-residue chain is Peptidyl-prolyl cis-trans isomerase FKBP35 (304 aa).

The region spanning 37–126 is the PPIase FKBP-type domain; that stretch reads GNEVTVHYVG…LFEIELLSFR (90 aa). TPR repeat units follow at residues 144–177, 194–227, and 228–261; these read AFDI…FIHT, ISCN…DKNN, and VKAL…NPNN.

Belongs to the FKBP-type PPIase family. In terms of assembly, homodimer. Interacts (via TPR repeats) with HSP90 (probably via MEEVD motif).

Its subcellular location is the cytoplasm. The protein localises to the nucleus. It carries out the reaction [protein]-peptidylproline (omega=180) = [protein]-peptidylproline (omega=0). Inhibited by FK506 and its derivates, such as ascomycin, and rapamycin. FK506 and rapamycin inhibit peptidylprolyl isomerase activity but not chaperone activity. Inhibited by N-(2-ethyl-phenyl)-2-(3H-imidazao [4, 5-b] pyridin-2-yl-sulfanyl)-acetamide (D44). Not inhibited by cyclosporin A. Inhibition of calcineurin phosphatase activity is enhanced by FK506. Has peptidylprolyl isomerase (PPIase) and co-chaperone activities. Assists protein folding by catalyzing the peptidyl conversion of cis and trans rotamers of the prolyl amide bond of protein substrates. Inhibits calcineurin phosphatase activity in vitro. Plays an essential role in merozoite egress from host erythrocytes. The chain is Peptidyl-prolyl cis-trans isomerase FKBP35 from Plasmodium falciparum (isolate 3D7).